The sequence spans 142 residues: Large ribosomal subunit protein uL11 (142 aa).

Belongs to the universal ribosomal protein uL11 family. As to quaternary structure, part of the ribosomal stalk of the 50S ribosomal subunit. Interacts with L10 and the large rRNA to form the base of the stalk. L10 forms an elongated spine to which L12 dimers bind in a sequential fashion forming a multimeric L10(L12)X complex. Post-translationally, one or more lysine residues are methylated.

In terms of biological role, forms part of the ribosomal stalk which helps the ribosome interact with GTP-bound translation factors. This Pelotomaculum thermopropionicum (strain DSM 13744 / JCM 10971 / SI) protein is Large ribosomal subunit protein uL11.